A 399-amino-acid chain; its full sequence is Flavohemoprotein (399 aa).

The region spanning 1–138 (MLDNKTIEII…IADAFIGIEK (138 aa)) is the Globin domain. Residue histidine 85 participates in heme b binding. Catalysis depends on charge relay system residues tyrosine 95 and glutamate 137. The tract at residues 149–399 (GGWKEYKPFV…GPQLSLAQSV (251 aa)) is reductase. An FAD-binding FR-type domain is found at 152–255 (KEYKPFVIAK…SAPAGDFVLD (104 aa)). Residues tyrosine 190 and 206 to 209 (RQYS) each bind FAD. 268–273 (GVGITP) lines the NADP(+) pocket. 388-391 (LFGP) is a binding site for FAD.

This sequence belongs to the globin family. Two-domain flavohemoproteins subfamily. It in the C-terminal section; belongs to the flavoprotein pyridine nucleotide cytochrome reductase family. The cofactor is heme b. It depends on FAD as a cofactor.

It catalyses the reaction 2 nitric oxide + NADPH + 2 O2 = 2 nitrate + NADP(+) + H(+). It carries out the reaction 2 nitric oxide + NADH + 2 O2 = 2 nitrate + NAD(+) + H(+). Is involved in NO detoxification in an aerobic process, termed nitric oxide dioxygenase (NOD) reaction that utilizes O(2) and NAD(P)H to convert NO to nitrate, which protects the bacterium from various noxious nitrogen compounds. Therefore, plays a central role in the inducible response to nitrosative stress. The protein is Flavohemoprotein (hmp) of Bacillus subtilis (strain 168).